A 149-amino-acid chain; its full sequence is Calmodulin (149 aa).

Position 2 is an N-acetylalanine (Ala-2). EF-hand domains lie at 8-43 (EQIAEFKEAFSLFDKDGDGTITTKELGTVMRSLGQN), 44-79 (PTEAELQDMINEVDADGNGTIDFPEFLTMMARKMKD), 81-116 (DSEEEIREAFRVFDKDGNGFISAAELRHVMTNLGEK), and 117-149 (LTDEEVDEMIREADIDGDGQVNYEEFVTMMMSK). The Ca(2+) site is built by Asp-21, Asp-23, Asp-25, Thr-27, Glu-32, Asp-57, Asp-59, Asn-61, Thr-63, Glu-68, Asp-94, Asp-96, Asn-98, and Glu-105. Lys-116 is subject to N6,N6,N6-trimethyllysine. Ca(2+) contacts are provided by Asp-130, Asp-132, Asp-134, Gln-136, and Glu-141.

It belongs to the calmodulin family.

Functionally, calmodulin mediates the control of a large number of enzymes, ion channels and other proteins by Ca(2+). Among the enzymes to be stimulated by the calmodulin-Ca(2+) complex are a number of protein kinases and phosphatases. The chain is Calmodulin from Lumbricus rubellus (Humus earthworm).